The chain runs to 268 residues: GTP cyclohydrolase FolE2 (268 aa).

The protein belongs to the GTP cyclohydrolase IV family.

The catalysed reaction is GTP + H2O = 7,8-dihydroneopterin 3'-triphosphate + formate + H(+). The protein operates within cofactor biosynthesis; 7,8-dihydroneopterin triphosphate biosynthesis; 7,8-dihydroneopterin triphosphate from GTP: step 1/1. In terms of biological role, converts GTP to 7,8-dihydroneopterin triphosphate. The polypeptide is GTP cyclohydrolase FolE2 (Paraburkholderia phymatum (strain DSM 17167 / CIP 108236 / LMG 21445 / STM815) (Burkholderia phymatum)).